Consider the following 1173-residue polypeptide: WASH complex subunit 4 (1173 aa).

At alanine 2 the chain carries N-acetylalanine. Serine 7 is modified (phosphoserine). The tract at residues 705 to 1173 is sufficient for interaction with WASHC5; the sequence is KDLALFFSLN…STVSADPVVK (469 aa). Positions 1135–1161 form a coiled coil; that stretch reads RADKTAAEENQEKKEKEEETKTSNGDL. A compositionally biased stretch (basic and acidic residues) spans 1142-1155; it reads EENQEKKEKEEETK. Positions 1142–1173 are disordered; the sequence is EENQEKKEKEEETKTSNGDLSDSTVSADPVVK. Threonine 1154 is subject to Phosphothreonine. Polar residues predominate over residues 1157–1167; it reads SNGDLSDSTVS.

The protein belongs to the SWIP family. As to quaternary structure, component of the WASH core complex also described as WASH regulatory complex (SHRC) composed of WASH (WASHC1, WASH2P or WASH3P), WASHC2 (WASHC2A or WASHC2C), WASHC3, WASHC4 and WASHC5. The WASH core complex associates via WASHC2 with the F-actin-capping protein dimer (formed by CAPZA1, CAPZA2 or CAPZA3 and CAPZB) in a transient or substoichiometric manner which was initially described as WASH complex.

The protein resides in the early endosome. Its function is as follows. Acts as a component of the WASH core complex that functions as a nucleation-promoting factor (NPF) at the surface of endosomes, where it recruits and activates the Arp2/3 complex to induce actin polymerization, playing a key role in the fission of tubules that serve as transport intermediates during endosome sorting. The polypeptide is WASH complex subunit 4 (Homo sapiens (Human)).